A 514-amino-acid polypeptide reads, in one-letter code: Cytochrome P450 monooxygenase FUS8 (514 aa).

A helical membrane pass occupies residues 28–48 (LTVTKAVGAFIVLFIIIPKVF). N-linked (GlcNAc...) asparagine glycans are attached at residues Asn-225 and Asn-443. Position 460 (Cys-460) interacts with heme.

This sequence belongs to the cytochrome P450 family. It depends on heme as a cofactor.

It localises to the membrane. It participates in mycotoxin biosynthesis. In terms of biological role, cytochrome P450 monooxygenase; part of the gene cluster that mediates the biosynthesis of the mycotoxin fusarin C. Within the cluster, FUS1, FUS2, FUS8 and FUS9 are sufficient for fusarin production. The roles of the other FUS members are yet undetermined. The fusarin C synthetase FUS1 is responsible for the condensation of one acetyl-coenzyme A (CoA) unit with six malonyl-CoA units and the amide linkage of the arising heptaketide and homoserine, subsequently releasing the first intermediate, prefusarin, as an alcohol with an open ring structure. The cytochrome P450 monooxygenase FUS8 participates in multiple oxidation processes at carbon C-20 and is able to use the FUS1 product as substrate, resulting in formation of 20-hydroxy-prefusarin. This reaction seems to be essential before the 2-pyrrolidone ring closure can be catalyzed by FUS2, generating 20-hydroxy-fusarin. FUS8 is able to further oxidizes carbon C-20 after ring closure, resulting in the formation of carboxy-fusarin C. As the last step, FUS9 methylates the hydroxyl group at C-21 to generate fusarin C. Fusarin C can then rearrange to epi-fusarin C, the (z)-isomers, and fusarin A and fusarin D. The sequence is that of Cytochrome P450 monooxygenase FUS8 from Gibberella moniliformis (strain M3125 / FGSC 7600) (Maize ear and stalk rot fungus).